We begin with the raw amino-acid sequence, 238 residues long: 1-(5-phosphoribosyl)-5-[(5-phosphoribosylamino)methylideneamino] imidazole-4-carboxamide isomerase (238 aa).

The active-site Proton acceptor is the Asp8. The active-site Proton donor is Asp129.

It belongs to the HisA/HisF family.

The protein resides in the cytoplasm. It carries out the reaction 1-(5-phospho-beta-D-ribosyl)-5-[(5-phospho-beta-D-ribosylamino)methylideneamino]imidazole-4-carboxamide = 5-[(5-phospho-1-deoxy-D-ribulos-1-ylimino)methylamino]-1-(5-phospho-beta-D-ribosyl)imidazole-4-carboxamide. Its pathway is amino-acid biosynthesis; L-histidine biosynthesis; L-histidine from 5-phospho-alpha-D-ribose 1-diphosphate: step 4/9. This Brachyspira hyodysenteriae (strain ATCC 49526 / WA1) protein is 1-(5-phosphoribosyl)-5-[(5-phosphoribosylamino)methylideneamino] imidazole-4-carboxamide isomerase.